The following is a 159-amino-acid chain: Ribosomal RNA large subunit methyltransferase H (159 aa).

Residues leucine 76, glycine 108, and 127 to 132 (FGLLTL) contribute to the S-adenosyl-L-methionine site.

Belongs to the RNA methyltransferase RlmH family. Homodimer.

The protein localises to the cytoplasm. It carries out the reaction pseudouridine(1915) in 23S rRNA + S-adenosyl-L-methionine = N(3)-methylpseudouridine(1915) in 23S rRNA + S-adenosyl-L-homocysteine + H(+). Its function is as follows. Specifically methylates the pseudouridine at position 1915 (m3Psi1915) in 23S rRNA. This Streptococcus equi subsp. zooepidemicus (strain MGCS10565) protein is Ribosomal RNA large subunit methyltransferase H.